The following is a 303-amino-acid chain: Diacylglycerol kinase (303 aa).

Residues 1 to 132 (MKRARIIYNP…IDIGQVNGQY (132 aa)) form the DAGKc domain. Residues 9 to 13 (NPTSG), threonine 40, 66 to 72 (GDGTINE), and threonine 93 each bind ATP. Mg(2+) contacts are provided by serine 213, aspartate 216, and methionine 218. The active-site Proton acceptor is glutamate 273.

Belongs to the diacylglycerol/lipid kinase family. The cofactor is Mg(2+).

It catalyses the reaction a 1,2-diacyl-sn-glycerol + ATP = a 1,2-diacyl-sn-glycero-3-phosphate + ADP + H(+). The enzyme catalyses 1,2-di-(9Z-octadecenoyl)-sn-glycerol + ATP = 1,2-di-(9Z-octadecenoyl)-sn-glycero-3-phosphate + ADP + H(+). Functionally, catalyzes the phosphorylation of diacylglycerol (DAG) into phosphatidic acid. Is a key enzyme involved in the production of lipoteichoic acid by reintroducing DAG formed from the breakdown of membrane phospholipids into the phosphatidylglycerol biosynthetic pathway. Is more active toward long-chain DAG compared with short-chain DAG. Is not able to phosphorylate substrates other than DAG, such as monoacylglycerol, ceramide, undecaprenol, phosphatidylinositol, or sphingosine. The chain is Diacylglycerol kinase (dagK) from Bacillus subtilis (strain 168).